A 404-amino-acid polypeptide reads, in one-letter code: Glycosyltransferase GlyB (404 aa).

Residues 1–267 form a GT8 domain region; the sequence is MNTKSIVFNA…ILLRKDIISR (267 aa). UDP-binding positions include 9-14 and 103-104; these read NADNDY and DS. Mn(2+) is bound by residues Asp-103, Asp-105, and His-228. 228–233 is a UDP binding site; that stretch reads HYTGVK.

The protein in the N-terminal section; belongs to the glycosyltransferase 8 family.

In terms of biological role, may be involved in the polymorphic O-glycosylation of the serine-rich repeat protein PsrP. Has equal hydrolytic activity against both UDP-galactose and UDP-glucose; no glycosyltransferase activity has been seen with tested substrates. This chain is Glycosyltransferase GlyB, found in Streptococcus pneumoniae serotype 4 (strain ATCC BAA-334 / TIGR4).